Here is a 140-residue protein sequence, read N- to C-terminus: DFMFGTSTASGGLAPSGVMNSLEPKGLAYYNNLLNELLKVLFTYFGDRAYAPNSPQRLSLSLSGVFHLLRGTADFYALNHYSSRDKYGLPKLLLTEDGYGDDGQLDDFEKNYLNATLQAMYLMKEQNVTSVHYTVNKCMN.

Arginine 70 (nucleophile) is an active-site residue. N-linked (GlcNAc...) asparagine glycans are attached at residues asparagine 114 and asparagine 127.

Belongs to the glycosyl hydrolase 1 family. In terms of assembly, homodimer.

It carries out the reaction a thioglucoside + H2O = a sugar + a thiol.. Its activity is regulated as follows. Inhibited by ascorbate. In terms of biological role, degradation of glucosinolates (glucose residue linked by a thioglucoside bound to an amino acid derivative) to glucose, sulfate and any of the products: thiocyanates, isothiocyanates, nitriles, epithionitriles or oxazolidine-2-thiones. In Brevicoryne brassicae (Mealy cabbage aphid), this protein is Myrosinase 2.